We begin with the raw amino-acid sequence, 107 residues long: MDEKWRLSKKDALAASCSSSSTSSKSKFSRSFSTSASSSKAPAFVRSSSTKCSVPSSSSSSISRSSSKKEKGSITQKYSSLAKEQKGRFYIMRRCVAMLVCWHKHDS.

Positions 1 to 12 (MDEKWRLSKKDA) are enriched in basic and acidic residues. Residues 1–79 (MDEKWRLSKK…EKGSITQKYS (79 aa)) are disordered. Residues 9 to 29 (KKDALAASCSSSSTSSKSKFS) traverse the membrane as a helical segment. A compositionally biased stretch (low complexity) spans 13–65 (LAASCSSSSTSSKSKFSRSFSTSASSSKAPAFVRSSSTKCSVPSSSSSSISRS). Residues 73–104 (SITQKYSSLAKEQKGRFYIMRRCVAMLVCWHK) form a required for DVL/RTFL small polypeptide activity region.

The protein belongs to the DVL/RTFL small polypeptides family.

Its subcellular location is the cell membrane. Small polypeptide acting as a regulatory molecule which coordinates cellular responses required for differentiation, growth and development, probably by restricting polar cell proliferation in lateral organs and coordinating socket cell recruitment and differentiation at trichome sites. The sequence is that of Small polypeptide DEVIL 9 from Arabidopsis thaliana (Mouse-ear cress).